The chain runs to 756 residues: Ribosomal RNA large subunit methyltransferase K/L (756 aa).

The 112-residue stretch at 46 to 157 (TAYRLCLWSR…RGEAILSLDL (112 aa)) folds into the THUMP domain. Basic and acidic residues predominate over residues 395–409 (ERRTPEQRQAEREQA). Residues 395–441 (ERRTPEQRQAEREQAAYDQTPNEPQERKFNKNGNPIKPTPAPAPVIE) form a disordered region.

The protein belongs to the methyltransferase superfamily. RlmKL family.

The protein localises to the cytoplasm. The enzyme catalyses guanosine(2445) in 23S rRNA + S-adenosyl-L-methionine = N(2)-methylguanosine(2445) in 23S rRNA + S-adenosyl-L-homocysteine + H(+). It carries out the reaction guanosine(2069) in 23S rRNA + S-adenosyl-L-methionine = N(2)-methylguanosine(2069) in 23S rRNA + S-adenosyl-L-homocysteine + H(+). Functionally, specifically methylates the guanine in position 2445 (m2G2445) and the guanine in position 2069 (m7G2069) of 23S rRNA. This Pseudomonas fluorescens (strain Pf0-1) protein is Ribosomal RNA large subunit methyltransferase K/L.